The following is a 381-amino-acid chain: 4-hydroxy-3-methylbut-2-en-1-yl diphosphate synthase (flavodoxin) (381 aa).

[4Fe-4S] cluster-binding residues include C280, C283, C315, and E322.

Belongs to the IspG family. It depends on [4Fe-4S] cluster as a cofactor.

The enzyme catalyses (2E)-4-hydroxy-3-methylbut-2-enyl diphosphate + oxidized [flavodoxin] + H2O + 2 H(+) = 2-C-methyl-D-erythritol 2,4-cyclic diphosphate + reduced [flavodoxin]. Its pathway is isoprenoid biosynthesis; isopentenyl diphosphate biosynthesis via DXP pathway; isopentenyl diphosphate from 1-deoxy-D-xylulose 5-phosphate: step 5/6. Its function is as follows. Converts 2C-methyl-D-erythritol 2,4-cyclodiphosphate (ME-2,4cPP) into 1-hydroxy-2-methyl-2-(E)-butenyl 4-diphosphate. This is 4-hydroxy-3-methylbut-2-en-1-yl diphosphate synthase (flavodoxin) from Clavibacter michiganensis subsp. michiganensis (strain NCPPB 382).